The sequence spans 264 residues: Somatomedin-B and thrombospondin type-1 domain-containing protein (264 aa).

The N-terminal stretch at methionine 1 to alanine 20 is a signal peptide. An SMB domain is found at glutamate 24–cysteine 75. 7 disulfide bridges follow: cysteine 28–cysteine 36, cysteine 28–cysteine 52, cysteine 36–cysteine 70, cysteine 50–cysteine 52, cysteine 50–cysteine 63, cysteine 56–cysteine 62, and cysteine 63–cysteine 70. Positions proline 74–serine 125 constitute a TSP type-1 domain. Residue asparagine 227 is glycosylated (N-linked (GlcNAc...) asparagine).

The protein belongs to the thrombospondin family.

The protein resides in the secreted. It is found in the extracellular space. Its subcellular location is the extracellular matrix. This Mus musculus (Mouse) protein is Somatomedin-B and thrombospondin type-1 domain-containing protein (Sbspon).